Reading from the N-terminus, the 172-residue chain is L-methionine sulfoximine/L-methionine sulfone acetyltransferase (172 aa).

One can recognise an N-acetyltransferase domain in the interval 3–166 (ASIRDAGVAD…DLTFMQLNLD (164 aa)). Residues 75–77 (RPF) and 85–87 (EHS) contribute to the substrate site. Residues 88-90 (VYV), 96-101 (GKGLGV), and Asn127 contribute to the acetyl-CoA site.

Homodimer.

The enzyme catalyses L-methionine sulfoximine + acetyl-CoA = N-acetyl-L-methionine sulfoximine + CoA + H(+). It catalyses the reaction L-methionine sulfone + acetyl-CoA = N-acetyl-L-methionine sulfone + CoA + H(+). Plays a role in the resistance against the toxic effects of L-methionine sulfoximine (MSX), a rare amino acid, which inhibits glutamine synthetase (GlnA). Catalyzes the acetylation of L-methionine sulfoximine (MSX). It can also use L-methionine sulfone (MSO). The sequence is that of L-methionine sulfoximine/L-methionine sulfone acetyltransferase from Pseudomonas paraeruginosa (strain DSM 24068 / PA7) (Pseudomonas aeruginosa (strain PA7)).